The primary structure comprises 649 residues: MISSDAKVKIQNFGRFLSNMVMPNIGAFIAWGFITALFIPTGWVPNETLASLVGPMITYLLPLLIGYTGGKLAGGERGAVVGAITTMGVIVGTDIPMFMGAMIVGPMGGWAIKAFDKKIDGKVRSGFEMLVNNFSAGIIGMLCAIIAFFLIGPFVKVLSGALAAGVNFLVTAHLLPLTSIFVEPAKILFLNNAINHGIFSPLGIQQASETGQSIFFLIEANPGPGLGILLAYMVFGKGTARQTAGGATIIHFFGGIHEIYFPYILMNPRLILAAIAGGMTGVFTLTVFNAGLVSPASPGSIFAVLLMTNKGSILGVVCSIFAAAAVSFTVAALLMKAQTSTEQDGDKDALVKATSIMQEMKAGSKGQAAPTATQSKKIDMANVQSIIVACDAGMGSSAMGASMLRKKIQEVGLPVTVTNMAINSLPAHVDMVITHQDLTDRARQHAPNAEHISLNNFLDSALYNQLVTQLLAAKRQAANDSQLIKPSILAANDDRYEVQQPSVFQLQKENIHLGLNAKNKEEAIRFAGNKLVELGYVHPEYVDAMFEREKLVSTYLGESIAVPHGTVDAKDRVIKTGIVICQYPQGVAFSEDSGDVAKLVIGIAAKNDEHIQVITTITNALDDPNAIDKLTSTKDVSDVLSILATSQAA.

Residues 13–342 form the PTS EIIC type-2 domain; it reads FGRFLSNMVM…LLMKAQTSTE (330 aa). 6 consecutive transmembrane segments (helical) span residues 25–46, 51–71, 135–156, 166–186, 274–293, and 314–335; these read IGAF…WVPN, SLVG…TGGK, SAGI…PFVK, VNFL…EPAK, AIAG…AGLV, and LGVV…ALLM. One can recognise a PTS EIIB type-2 domain in the interval 384–475; the sequence is QSIIVACDAG…LVTQLLAAKR (92 aa). The active-site Phosphocysteine intermediate; for EIIB activity is the Cys-390. Cys-390 is modified (phosphocysteine; by EIIA). The region spanning 504–646 is the PTS EIIA type-2 domain; that stretch reads FQLQKENIHL…SDVLSILATS (143 aa). His-564 functions as the Tele-phosphohistidine intermediate; for EIIA activity in the catalytic mechanism. His-564 carries the phosphohistidine; by HPr modification.

In terms of assembly, homodimer. Post-translationally, an intramolecular phosphotransfer takes places between His-564 and Cys-390.

The protein localises to the cell inner membrane. It catalyses the reaction D-mannitol(out) + N(pros)-phospho-L-histidyl-[protein] = D-mannitol 1-phosphate(in) + L-histidyl-[protein]. Functionally, the phosphoenolpyruvate-dependent sugar phosphotransferase system (sugar PTS), a major carbohydrate active transport system, catalyzes the phosphorylation of incoming sugar substrates concomitantly with their translocation across the cell membrane. This system is involved in D-mannitol transport. The chain is PTS system mannitol-specific EIICBA component (mtlA) from Vibrio cholerae serotype O1 (strain ATCC 39315 / El Tor Inaba N16961).